A 396-amino-acid polypeptide reads, in one-letter code: Probable sugar efflux transporter (396 aa).

12 consecutive transmembrane segments (helical) span residues Val-15–Leu-35, Val-50–Leu-70, Leu-81–Phe-101, Val-103–Ala-123, Ala-136–Ile-156, Thr-169–Pro-189, Pro-209–Tyr-229, Phe-246–Gly-266, Ser-275–Ala-295, Leu-301–Val-321, Val-333–Gly-353, and Ala-364–Phe-384.

Belongs to the major facilitator superfamily. SotB (TC 2.A.1.2) family.

It is found in the cell inner membrane. Functionally, involved in the efflux of sugars. The physiological role may be the reduction of the intracellular concentration of toxic sugars or sugar metabolites. This chain is Probable sugar efflux transporter, found in Salmonella paratyphi C (strain RKS4594).